Reading from the N-terminus, the 109-residue chain is uncharacterized protein (109 aa).

This is an uncharacterized protein from Mycoplasma genitalium (strain ATCC 33530 / DSM 19775 / NCTC 10195 / G37) (Mycoplasmoides genitalium).